Consider the following 137-residue polypeptide: Actin-depolymerizing factor 12 (137 aa).

Ser-6 carries the phosphoserine modification. Residues 7-137 (GMAVEDECKL…SLDIIKSRAL (131 aa)) enclose the ADF-H domain.

The protein belongs to the actin-binding proteins ADF family. Specifically expressed in pollen.

It is found in the cytoplasm. The protein localises to the cytoskeleton. Functionally, actin-depolymerizing protein. Severs actin filaments (F-actin) and binds to actin monomers. The chain is Actin-depolymerizing factor 12 from Arabidopsis thaliana (Mouse-ear cress).